We begin with the raw amino-acid sequence, 626 residues long: Chaperone protein HtpG (626 aa).

Residues 1-341 (METKQFKAES…SEDLSLNISR (341 aa)) are a; substrate-binding. The interval 342-552 (EMLQHDRQLK…EGEISIEMEK (211 aa)) is b. The tract at residues 553-626 (ILSAMPNNEN…FSNSICKLMI (74 aa)) is c.

Belongs to the heat shock protein 90 family. As to quaternary structure, homodimer.

It is found in the cytoplasm. Functionally, molecular chaperone. Has ATPase activity. The polypeptide is Chaperone protein HtpG (Alkaliphilus oremlandii (strain OhILAs) (Clostridium oremlandii (strain OhILAs))).